The primary structure comprises 227 residues: Cytochrome c oxidase subunit 2 (227 aa).

The Mitochondrial intermembrane portion of the chain corresponds to 1–14 (MAYPFQMGLQDATS). Residues 15-45 (PIMEELLHFHDHTLMIVFLISSLVLYIISLM) form a helical membrane-spanning segment. Topologically, residues 46–59 (LTTKLTHTSTMDAQ) are mitochondrial matrix. Residues 60–87 (EVETIWTILPAIILILIALPSLRILYMM) form a helical membrane-spanning segment. Residues 88–227 (DEINNPSLTV…HFEKWSASLL (140 aa)) lie on the Mitochondrial intermembrane side of the membrane. The Cu cation site is built by His-161, Cys-196, Glu-198, Cys-200, His-204, and Met-207. Glu-198 serves as a coordination point for Mg(2+).

This sequence belongs to the cytochrome c oxidase subunit 2 family. In terms of assembly, component of the cytochrome c oxidase (complex IV, CIV), a multisubunit enzyme composed of 14 subunits. The complex is composed of a catalytic core of 3 subunits MT-CO1, MT-CO2 and MT-CO3, encoded in the mitochondrial DNA, and 11 supernumerary subunits COX4I, COX5A, COX5B, COX6A, COX6B, COX6C, COX7A, COX7B, COX7C, COX8 and NDUFA4, which are encoded in the nuclear genome. The complex exists as a monomer or a dimer and forms supercomplexes (SCs) in the inner mitochondrial membrane with NADH-ubiquinone oxidoreductase (complex I, CI) and ubiquinol-cytochrome c oxidoreductase (cytochrome b-c1 complex, complex III, CIII), resulting in different assemblies (supercomplex SCI(1)III(2)IV(1) and megacomplex MCI(2)III(2)IV(2)). Found in a complex with TMEM177, COA6, COX18, COX20, SCO1 and SCO2. Interacts with TMEM177 in a COX20-dependent manner. Interacts with COX20. Interacts with COX16. The cofactor is Cu cation.

It localises to the mitochondrion inner membrane. The enzyme catalyses 4 Fe(II)-[cytochrome c] + O2 + 8 H(+)(in) = 4 Fe(III)-[cytochrome c] + 2 H2O + 4 H(+)(out). Component of the cytochrome c oxidase, the last enzyme in the mitochondrial electron transport chain which drives oxidative phosphorylation. The respiratory chain contains 3 multisubunit complexes succinate dehydrogenase (complex II, CII), ubiquinol-cytochrome c oxidoreductase (cytochrome b-c1 complex, complex III, CIII) and cytochrome c oxidase (complex IV, CIV), that cooperate to transfer electrons derived from NADH and succinate to molecular oxygen, creating an electrochemical gradient over the inner membrane that drives transmembrane transport and the ATP synthase. Cytochrome c oxidase is the component of the respiratory chain that catalyzes the reduction of oxygen to water. Electrons originating from reduced cytochrome c in the intermembrane space (IMS) are transferred via the dinuclear copper A center (CU(A)) of subunit 2 and heme A of subunit 1 to the active site in subunit 1, a binuclear center (BNC) formed by heme A3 and copper B (CU(B)). The BNC reduces molecular oxygen to 2 water molecules using 4 electrons from cytochrome c in the IMS and 4 protons from the mitochondrial matrix. In Ailurus fulgens (Himalayan red panda), this protein is Cytochrome c oxidase subunit 2 (MT-CO2).